A 358-amino-acid polypeptide reads, in one-letter code: Sulfoquinovosyl glycerol transport ATP-binding protein SmoE (358 aa).

Positions 4–234 (VSLRKLDKSY…PESVFVGGFV (231 aa)) constitute an ABC transporter domain. ATP is bound at residue 36–43 (GPSGCGKS).

This sequence belongs to the ABC transporter superfamily. In terms of assembly, the complex is probably composed of two ATP-binding proteins (SmoE), two transmembrane proteins (SmoG and SmoH) and a solute-binding protein (SmoF).

Its subcellular location is the cell inner membrane. Part of the ABC transporter complex SmoEFGH involved in sulfoquinovosyl glycerol (SQGro) uptake. Responsible for energy coupling to the transport system. The polypeptide is Sulfoquinovosyl glycerol transport ATP-binding protein SmoE (Agrobacterium fabrum (strain C58 / ATCC 33970) (Agrobacterium tumefaciens (strain C58))).